The primary structure comprises 50 residues: Capsid protein G8P (50 aa).

The Periplasmic segment spans residues alanine 1 to tyrosine 21. A helical membrane pass occupies residues isoleucine 22–phenylalanine 42. Over lysine 43–serine 50 the chain is Cytoplasmic.

Belongs to the inovirus capsid protein family. In terms of assembly, homomultimerizes. There are several thousands of this protein in the phage capsid.

The protein localises to the virion. Its subcellular location is the host membrane. In terms of biological role, self assembles to form a helical capsid wrapping up the viral genomic DNA. The capsid displays a filamentous structure with a length of 760-1950 nm and a width of 6-8 nm. The virion assembly and budding take place at the host inner membrane. The sequence is that of Capsid protein G8P (VIII) from Escherichia coli (Bacteriophage ZJ-2).